A 358-amino-acid chain; its full sequence is uncharacterized protein (358 aa).

Zn(2+) is bound by residues cysteine 39, histidine 61, cysteine 92, cysteine 95, cysteine 98, cysteine 106, and aspartate 157.

It belongs to the zinc-containing alcohol dehydrogenase family. The cofactor is Zn(2+).

This is an uncharacterized protein from Escherichia coli (strain K12).